The chain runs to 515 residues: Vesicular acetylcholine transporter (515 aa).

Over 1-40 the chain is Cytoplasmic; sequence MGVTMAVGLAKAAMGKISSAIGERSKRISGAMNEPRRKRK. The chain crosses the membrane as a helical span at residues 41-61; it reads ILLVIVCIAMLLDNMLYMVIV. At 62-112 the chain is on the lumenal, vesicle side; sequence PIIPNYLETIRTYKLVYITTPSNGTNGSLLNSTQRAVLERNPNANEDIQIG. N-linked (GlcNAc...) asparagine glycans are attached at residues asparagine 84, asparagine 87, and asparagine 92. A helical transmembrane segment spans residues 113 to 133; sequence VLFASKAILQLLSNPFTGTFI. Over 134–139 the chain is Cytoplasmic; sequence DRVGYD. The helical transmembrane segment at 140 to 160 threads the bilayer; sequence IPLLIGLTIMFFSTITFAFGE. At 161-169 the chain is on the lumenal, vesicle side; that stretch reads SYAVLFAAR. The helical transmembrane segment at 170-190 threads the bilayer; sequence SLQGLGSAFADTSGIAMIADK. Residues 191 to 201 are Cytoplasmic-facing; sequence YTEESERTQAL. A helical membrane pass occupies residues 202–222; that stretch reads GIALAFISFGSLVAPPFGGVL. Topologically, residues 223 to 229 are lumenal, vesicle; the sequence is YQFAGKW. The chain crosses the membrane as a helical span at residues 230 to 250; that stretch reads VPFLVLSFVCLLDGILLLMVV. Over 251-271 the chain is Cytoplasmic; the sequence is TPFASRTRENMLQGTPIYKLM. Residues 272-292 traverse the membrane as a helical segment; the sequence is IDPYIAVVAGALTTCNIPLAF. Residues 293–310 lie on the Lumenal, vesicle side of the membrane; that stretch reads LEPTISNWMKKTMNASEW. Asparagine 306 carries an N-linked (GlcNAc...) asparagine glycan. The helical transmembrane segment at 311-331 threads the bilayer; that stretch reads QMGITWLPAFFPHILGVYITV. Residues 332-341 lie on the Cytoplasmic side of the membrane; the sequence is KLAAKYPNYQ. The chain crosses the membrane as a helical span at residues 342-362; that stretch reads WFYGAVGLVIIGASSCTIPAC. At 363 to 367 the chain is on the lumenal, vesicle side; sequence RNFEE. A helical transmembrane segment spans residues 368 to 388; the sequence is LIIPLCALCFGIALVDTALLP. Residues 389 to 404 are Cytoplasmic-facing; it reads TLAFLVDIRYVSVYGS. The helical transmembrane segment at 405-425 threads the bilayer; that stretch reads VYAIADISYSVAYALGPIMAG. Topologically, residues 426 to 432 are lumenal, vesicle; it reads QIVHDLG. The helical transmembrane segment at 433–453 threads the bilayer; sequence FVQLNLGMGLVNILYAPALLF. Residues 454-515 lie on the Cytoplasmic side of the membrane; sequence LRNVCQMKPS…VLSDQEGYSE (62 aa). Residues 489 to 515 form a disordered region; sequence AAKEPHGSSSGNHSVHAVLSDQEGYSE.

This sequence belongs to the major facilitator superfamily. Vesicular transporter family. Electric lobe.

The protein resides in the membrane. Involved in acetylcholine transport into synaptic vesicles. The polypeptide is Vesicular acetylcholine transporter (Tetronarce californica (Pacific electric ray)).